Here is a 331-residue protein sequence, read N- to C-terminus: Eukaryotic translation initiation factor 2 subunit 2 (331 aa).

2 disordered regions span residues 1-75 (MSGD…DLNF) and 97-120 (AIKD…LDIM). S2 carries the N-acetylserine modification. Phosphoserine is present on residues S2 and S13. Basic residues predominate over residues 13-22 (SKKKKKKKKP). Residue T36 is modified to Phosphothreonine. Over residues 40 to 51 (ETKEVEPEPTEE) the composition is skewed to basic and acidic residues. S67 carries the post-translational modification Phosphoserine. K102 is covalently cross-linked (Glycyl lysine isopeptide (Lys-Gly) (interchain with G-Cter in SUMO2)). S105 carries the post-translational modification Phosphoserine. Positions 106-118 (DAQEPAEPEDDLD) are enriched in acidic residues. A phosphoserine mark is found at S158 and S216. Residues K263 and K291 each carry the N6-acetyllysine modification. The C4-type zinc-finger motif lies at 279–303 (CHTCRSPDTILQKDTRLYFLQCETC).

Belongs to the eIF-2-beta/eIF-5 family. As to quaternary structure, eukaryotic translation initiation factor 2 eIF2 is a heterotrimeric complex composed of an alpha (EIF2S1), a beta (EIF2S2) and a gamma (EIF2S3) chain. eIF2 is member of the 43S pre-initiation complex (43S PIC). eIF2 forms a complex with at least CELF1/CUGBP1, CALR, CALR3, EIF2S1, EIF2S2, HSP90B1 and HSPA5. Interacts with BZW2/5MP1. Interacts with EIF5.

It localises to the cytoplasm. The protein localises to the cytosol. Its function is as follows. Component of the eIF2 complex that functions in the early steps of protein synthesis by forming a ternary complex with GTP and initiator tRNA. This complex binds to a 40S ribosomal subunit, followed by mRNA binding to form the 43S pre-initiation complex (43S PIC). Junction of the 60S ribosomal subunit to form the 80S initiation complex is preceded by hydrolysis of the GTP bound to eIF2 and release of an eIF2-GDP binary complex. In order for eIF2 to recycle and catalyze another round of initiation, the GDP bound to eIF2 must exchange with GTP by way of a reaction catalyzed by eIF2B. The polypeptide is Eukaryotic translation initiation factor 2 subunit 2 (Eif2s2) (Mus musculus (Mouse)).